A 921-amino-acid chain; its full sequence is MSKIRVSNLAEKLGLEHKEVLARLKEIGVDAKTATSLVDEDVLKKLMPSLSPDGAEEVRVTTTIIRRRAKAAPVVEPAPAAVAESLEEKPAEPVAPAAPTPPEVPAAAPAPPKAAAAPAEAATMNARIIAPPPAPVETAAPVAAAPVAAATAPPEKALPTPPVVEAPVVEAKPEPVVEKPKVPAQPDKPSANQARILGRMEIPGVTTRPTRVVRRDGTVAPAAEHAQRRPSPAAGAPSRGAAPDRSRMKPATLPPSAPPAADDRRKFGGKSAAPHSEGAGKGGKKGGASTAKKKEQPKKHEILEKRERVFDPVYRGSRKKVKERASETRKTEITIPKAIKRIIKISETISVGELAKRMGIKANDLIKSLMKMGMMVTINHALDFETTVILASEYGYEVENMAVDLDEILESTPDAPETLVKRPPVVTIMGHVDHGKTSLLDAIREANVIAGEAGGITQHIGAYDVELNGRKITFLDTPGHEAFTAMRARGAKVTDIVILVVAADDGVMPQTREAINHSKAAGVPIVVAINKIDKPEAKPERVKQELMEFGLVASEWGGDATMVEVSAKKRLNLEGLLEMVLLQADLMELKANPDKEAKGTIVEAKLDRGRGPVATVLVQEGTLKNGDYCVVGVHSGRVRAIHNDRGEKVNEAGPSMPVEVIGLSGVPDAGDVFVSLKDEKQAKEIATLRQIKQREIEMAKHSKVTLEDLYKQIQSGDVKDLNVIVKGDVQGSVEVVSDSFRKLSTDAVRLNVIHSGVGAITETDVNLAAASNTIIIGFNVRPEVKAQAMAEKEGVDIRLYSIIYDAVEDVKKAMEGLLDPTLKEKYLGRAEIREVFSVPKIGNIAGSYVQDGKMLRNAQARLLRDNVVIYEGKLSSLRRIKDDVKEVAAGYECGIGLENYNNIRIGDIIEAFEIEKVATKL.

3 disordered regions span residues 81–118, 175–194, and 219–301; these read AVAESLEEKPAEPVAPAAPTPPEVPAAAPAPPKAAAAP, PVVEKPKVPAQPDKPSANQA, and VAPA…KKHE. A compositionally biased stretch (pro residues) spans 96 to 112; the sequence is PAAPTPPEVPAAAPAPP. Residues 229–241 show a composition bias toward low complexity; the sequence is RPSPAAGAPSRGA. The segment covering 292–301 has biased composition (basic and acidic residues); it reads KKKEQPKKHE. In terms of domain architecture, tr-type G spans 421 to 590; that stretch reads KRPPVVTIMG…LLQADLMELK (170 aa). Residues 430–437 are G1; that stretch reads GHVDHGKT. 430–437 provides a ligand contact to GTP; the sequence is GHVDHGKT. A G2 region spans residues 455-459; that stretch reads GITQH. The tract at residues 476–479 is G3; it reads DTPG. Residues 476 to 480 and 530 to 533 contribute to the GTP site; these read DTPGH and NKID. The interval 530-533 is G4; it reads NKID. A G5 region spans residues 566–568; that stretch reads SAK.

The protein belongs to the TRAFAC class translation factor GTPase superfamily. Classic translation factor GTPase family. IF-2 subfamily.

The protein localises to the cytoplasm. Functionally, one of the essential components for the initiation of protein synthesis. Protects formylmethionyl-tRNA from spontaneous hydrolysis and promotes its binding to the 30S ribosomal subunits. Also involved in the hydrolysis of GTP during the formation of the 70S ribosomal complex. This is Translation initiation factor IF-2 from Pelobacter propionicus (strain DSM 2379 / NBRC 103807 / OttBd1).